A 356-amino-acid polypeptide reads, in one-letter code: Homoserine O-succinyltransferase (356 aa).

C146 acts as the Acyl-thioester intermediate in catalysis. 2 residues coordinate substrate: K167 and S196. The Proton acceptor role is filled by H239. E241 is a catalytic residue. R253 contacts substrate.

Belongs to the MetA family.

The protein resides in the cytoplasm. It catalyses the reaction L-homoserine + succinyl-CoA = O-succinyl-L-homoserine + CoA. The protein operates within amino-acid biosynthesis; L-methionine biosynthesis via de novo pathway; O-succinyl-L-homoserine from L-homoserine: step 1/1. Its function is as follows. Transfers a succinyl group from succinyl-CoA to L-homoserine, forming succinyl-L-homoserine. This Thioalkalivibrio nitratireducens (strain DSM 14787 / UNIQEM 213 / ALEN2) protein is Homoserine O-succinyltransferase.